The primary structure comprises 504 residues: Cytochrome P450 6B2 (504 aa).

Residue C445 coordinates heme.

This sequence belongs to the cytochrome P450 family. It depends on heme as a cofactor.

It is found in the endoplasmic reticulum membrane. The protein localises to the microsome membrane. It catalyses the reaction an organic molecule + reduced [NADPH--hemoprotein reductase] + O2 = an alcohol + oxidized [NADPH--hemoprotein reductase] + H2O + H(+). The chain is Cytochrome P450 6B2 (CYP6B2) from Helicoverpa armigera (Cotton bollworm).